Reading from the N-terminus, the 238-residue chain is Photosynthetic NDH subunit of lumenal location 1, chloroplastic (238 aa).

The protein belongs to the PsbP family. Part of the chloroplast NDH complex, composed of a mixture of chloroplast and nucleus encoded subunits. Component of the NDH lumenal subcomplex, at least composed of PnsL1, PnsL2, PnsL3, PnsL4 and PnsL5.

It is found in the plastid. Its subcellular location is the chloroplast thylakoid membrane. Functionally, NDH shuttles electrons from NAD(P)H:plastoquinone, via FMN and iron-sulfur (Fe-S) centers, to quinones in the photosynthetic chain and possibly in a chloroplast respiratory chain. The immediate electron acceptor for the enzyme in this species is believed to be plastoquinone. Couples the redox reaction to proton translocation, and thus conserves the redox energy in a proton gradient. Required for accumulation of the chloroplast NAD(P)H dehydrogenase (NDH) complex. The sequence is that of Photosynthetic NDH subunit of lumenal location 1, chloroplastic from Arabidopsis thaliana (Mouse-ear cress).